A 344-amino-acid polypeptide reads, in one-letter code: Phenylalanine--tRNA ligase alpha subunit (344 aa).

Residue Glu259 participates in Mg(2+) binding.

Belongs to the class-II aminoacyl-tRNA synthetase family. Phe-tRNA synthetase alpha subunit type 1 subfamily. In terms of assembly, tetramer of two alpha and two beta subunits. Mg(2+) serves as cofactor.

It is found in the cytoplasm. It carries out the reaction tRNA(Phe) + L-phenylalanine + ATP = L-phenylalanyl-tRNA(Phe) + AMP + diphosphate + H(+). The protein is Phenylalanine--tRNA ligase alpha subunit of Petrotoga mobilis (strain DSM 10674 / SJ95).